A 55-amino-acid polypeptide reads, in one-letter code: Potassium channel toxin alpha-KTX 12 Sp2 (55 aa).

The signal sequence occupies residues 1–18 (MRLAIILLLMTTIVLTIG). 3 cysteine pairs are disulfide-bonded: Cys26–Cys46, Cys32–Cys51, and Cys36–Cys53.

The protein belongs to the short scorpion toxin superfamily. Potassium channel inhibitor family. Alpha-KTx 12 subfamily. As to expression, expressed by the venom gland.

The protein localises to the secreted. Blocks mouse voltage-gated potassium channels Kv1.3/KCNA3 (IC(50)=0.3-30 nM), when the channel is expressed in Jurkat T cells or in HEK293 cells. Also shows a weaker inhibition on mKv1.2/KCNA2 (IC(50)=56.9 nM) and mKv1.1/KCNA1 (IC(50)=485 nM). Probably through the inhibition of both Kv1.2/KCNA2 and Kv1.3/KCNA3, the toxin also reduces the free calcium concentration in Jurkat T cells, inhibits the activation of Jurkat T cells and reduces the release of inflammatory cytokines interleukin-2, showing a strong immunosuppressant effect. The sequence is that of Potassium channel toxin alpha-KTX 12 Sp2 from Scorpiops pococki (Scorpion).